The chain runs to 470 residues: Cannabinoid receptor type 1B (470 aa).

Residues 1-113 (MKLALHRIAG…CFMILTPAQQ (113 aa)) lie on the Extracellular side of the membrane. 2 N-linked (GlcNAc...) asparagine glycosylation sites follow: N78 and N86. A helical transmembrane segment spans residues 114–139 (LVIVILAITLGTFTVLENFVVLCVIL). Residues 140–151 (HSHTLRSRPSYH) lie on the Cytoplasmic side of the membrane. Residues 152–172 (FIGSLAVADLIGSIIFVYSFL) traverse the membrane as a helical segment. At 173–184 (DFHVLHRKDSPS) the chain is on the extracellular side. A helical transmembrane segment spans residues 185 to 209 (IFLFKLAGVIASFTASVGSLFLTAI). Residues 210–229 (DRYVSIHRPMAYKRIITKTK) lie on the Cytoplasmic side of the membrane. A helical transmembrane segment spans residues 230 to 252 (AVIAFSVMWAISIEFSLLPLLGW). The Extracellular portion of the chain corresponds to 253-270 (NCKRLHSVCSDIFPLIDE). A helical transmembrane segment spans residues 271–296 (KYLMFWIGMTTVLLLFIIYAYMFILW). Topologically, residues 297 to 341 (KSHHHAVRMLSRSSQRSIIVYTSEGTKVQTVRPEQARMDLRLAKT) are cytoplasmic. Residues 342–362 (LVLILVALIICWGPLLAIMVY) traverse the membrane as a helical segment. Topologically, residues 363-374 (DLFGRVNDFIKT) are extracellular. Residues 375-396 (VFAFCSMLCLLNSTINPVIYAM) form a helical membrane-spanning segment. The Cytoplasmic segment spans residues 397–470 (RSKDLRRAFV…VTASSPAEAV (74 aa)). C412 is lipidated: S-palmitoyl cysteine. The segment covering 418-434 (SLDSSAESDWNSRSVRS) has biased composition (polar residues). The segment at 418–450 (SLDSSAESDWNSRSVRSTGGRAGKDRSVGGKPQ) is disordered.

It belongs to the G-protein coupled receptor 1 family. In terms of processing, palmitoylation at Cys-412 is important for recruitment at both plasma membrane and lipid rafts and association with G protein alpha subunits.

It localises to the cell membrane. It is found in the mitochondrion outer membrane. The protein resides in the cell projection. The protein localises to the axon. Its subcellular location is the presynapse. Its function is as follows. G-protein coupled receptor for cannabinoids. Mediates many cannabinoid-induced effects in the central nervous system (CNS), as well as in peripheral tissues. Regulates cellular respiration and energy production in response to cannabinoids. Signaling typically involves reduction in cyclic AMP. The chain is Cannabinoid receptor type 1B (cnr1b) from Takifugu rubripes (Japanese pufferfish).